Here is a 320-residue protein sequence, read N- to C-terminus: Cytochrome c biogenesis protein CcsA (320 aa).

Helical transmembrane passes span 13-33 (ISFS…FLLV), 46-66 (GMIV…IYSG), 73-93 (LYES…VSYL), 102-122 (LSAI…SGLL), 147-167 (MVLG…LLVI), 226-246 (IISL…VWAN), 259-274 (ETWA…IYFH), and 289-309 (VASM…LLGI).

This sequence belongs to the CcmF/CycK/Ccl1/NrfE/CcsA family. May interact with Ccs1.

The protein localises to the plastid. It is found in the chloroplast thylakoid membrane. Required during biogenesis of c-type cytochromes (cytochrome c6 and cytochrome f) at the step of heme attachment. The chain is Cytochrome c biogenesis protein CcsA from Gossypium hirsutum (Upland cotton).